The sequence spans 325 residues: N-acetyl-gamma-glutamyl-phosphate reductase (325 aa).

The active site involves cysteine 131.

The protein belongs to the NAGSA dehydrogenase family. Type 1 subfamily.

It localises to the cytoplasm. It carries out the reaction N-acetyl-L-glutamate 5-semialdehyde + phosphate + NADP(+) = N-acetyl-L-glutamyl 5-phosphate + NADPH + H(+). It functions in the pathway amino-acid biosynthesis; L-arginine biosynthesis; N(2)-acetyl-L-ornithine from L-glutamate: step 3/4. Catalyzes the NADPH-dependent reduction of N-acetyl-5-glutamyl phosphate to yield N-acetyl-L-glutamate 5-semialdehyde. The polypeptide is N-acetyl-gamma-glutamyl-phosphate reductase (Methylobacterium sp. (strain 4-46)).